A 120-amino-acid chain; its full sequence is Alpha-amylase inhibitor Haim-2 (120 aa).

The N-terminal stretch at 1–32 (MKRYVCSTFVACVMVLCVIPASGAAAHEAVAE) is a signal peptide. Cystine bridges form between C43-C59 and C77-C104.

Its function is as follows. Inhibits mammalian alpha-amylases specifically but has no action on plant and microbial alpha-amylases. The sequence is that of Alpha-amylase inhibitor Haim-2 from Streptomyces griseosporeus.